The sequence spans 247 residues: Glucosamine-6-phosphate deaminase (247 aa).

Asp67 acts as the Proton acceptor; for enolization step in catalysis. Residue Asn136 is the For ring-opening step of the active site. His138 serves as the catalytic Proton acceptor; for ring-opening step. Glu143 serves as the catalytic For ring-opening step.

The protein belongs to the glucosamine/galactosamine-6-phosphate isomerase family. NagB subfamily.

It carries out the reaction alpha-D-glucosamine 6-phosphate + H2O = beta-D-fructose 6-phosphate + NH4(+). The protein operates within amino-sugar metabolism; N-acetylneuraminate degradation; D-fructose 6-phosphate from N-acetylneuraminate: step 5/5. In terms of biological role, catalyzes the reversible isomerization-deamination of glucosamine 6-phosphate (GlcN6P) to form fructose 6-phosphate (Fru6P) and ammonium ion. The protein is Glucosamine-6-phosphate deaminase of Shouchella clausii (strain KSM-K16) (Alkalihalobacillus clausii).